Here is a 550-residue protein sequence, read N- to C-terminus: Solute carrier family 22 member 6 (550 aa).

The Cytoplasmic portion of the chain corresponds to Met-1 to Gln-9. A helical membrane pass occupies residues Val-10–Leu-30. Over Met-31–Gln-135 the chain is Extracellular. N-linked (GlcNAc...) asparagine glycosylation is found at Asn-56, Asn-92, and Asn-113. Residues Leu-136–Ala-156 traverse the membrane as a helical segment. Over Asp-157–Val-164 the chain is Cytoplasmic. A helical transmembrane segment spans residues Leu-165–Ile-187. Over Tyr-188–Ala-190 the chain is Extracellular. Residues Phe-191 to Trp-213 form a helical membrane-spanning segment. The Cytoplasmic segment spans residues Met-214–Thr-224. Residues Leu-225 to Pro-245 traverse the membrane as a helical segment. Topologically, residues His-246–Arg-248 are extracellular. The chain crosses the membrane as a helical span at residues His-249–Ile-269. Over Glu-270–His-337 the chain is Cytoplasmic. The chain crosses the membrane as a helical span at residues Leu-338–Met-358. Residues Asp-359–Tyr-368 are Extracellular-facing. A helical transmembrane segment spans residues Leu-369 to Ile-389. Topologically, residues Asn-390 to Arg-395 are cytoplasmic. Residues Pro-396–Pro-416 traverse the membrane as a helical segment. Topologically, residues Gln-417 to Ser-425 are extracellular. The chain crosses the membrane as a helical span at residues Leu-426–Gly-446. Residues Glu-447–Thr-456 are Cytoplasmic-facing. Residues Gly-457 to Met-477 traverse the membrane as a helical segment. Over Thr-478–Ser-484 the chain is Extracellular. Residues Val-485–Pro-505 traverse the membrane as a helical segment. At Glu-506–Leu-550 the chain is on the cytoplasmic side. Residues Pro-513–Leu-550 form a disordered region.

It belongs to the major facilitator (TC 2.A.1) superfamily. Organic cation transporter (TC 2.A.1.19) family. Post-translationally, glycosylated. Glycosylation is necessary for proper targeting of the transporter to the plasma membrane. As to expression, expressed in kidney; in the basolateral membrane of the proximal tubule.

It is found in the basolateral cell membrane. The protein resides in the basal cell membrane. It catalyses the reaction (6R)-L-erythro-5,6,7,8-tetrahydrobiopterin(out) + a dicarboxylate(in) = (6R)-L-erythro-5,6,7,8-tetrahydrobiopterin(in) + a dicarboxylate(out). The enzyme catalyses L-erythro-7,8-dihydrobiopterin(out) + a dicarboxylate(in) = L-erythro-7,8-dihydrobiopterin(in) + a dicarboxylate(out). It carries out the reaction L-sepiapterin(out) + a dicarboxylate(in) = L-sepiapterin(in) + a dicarboxylate(out). The catalysed reaction is prostaglandin F2alpha(out) + a dicarboxylate(in) = prostaglandin F2alpha(in) + a dicarboxylate(out). It catalyses the reaction prostaglandin E2(out) + a dicarboxylate(in) = prostaglandin E2(in) + a dicarboxylate(out). The enzyme catalyses 3',5'-cyclic AMP(out) + a dicarboxylate(in) = 3',5'-cyclic AMP(in) + a dicarboxylate(out). It carries out the reaction 3',5'-cyclic GMP(out) + a dicarboxylate(in) = 3',5'-cyclic GMP(in) + a dicarboxylate(out). The catalysed reaction is urate(out) + a dicarboxylate(in) = urate(in) + a dicarboxylate(out). It catalyses the reaction kynurenate(out) + glutarate(in) = kynurenate(in) + glutarate(out). The enzyme catalyses (indol-3-yl)acetate(out) + a dicarboxylate(in) = (indol-3-yl)acetate(in) + a dicarboxylate(out). It carries out the reaction indoxyl sulfate(out) + a dicarboxylate(in) = indoxyl sulfate(in) + a dicarboxylate(out). The catalysed reaction is N-benzoylglycine(out) + a dicarboxylate(in) = N-benzoylglycine(in) + a dicarboxylate(out). It catalyses the reaction 3-carboxy-4-methyl-5-propyl-2-furanpropanoate(out) + a dicarboxylate(in) = 3-carboxy-4-methyl-5-propyl-2-furanpropanoate(in) + a dicarboxylate(out). In terms of biological role, secondary active transporter that functions as a Na(+)-independent organic anion (OA)/dicarboxylate antiporter where the uptake of one molecule of OA into the cell is coupled with an efflux of one molecule of intracellular dicarboxylate such as 2-oxoglutarate or glutarate. Mediates the uptake of OA across the basolateral side of proximal tubule epithelial cells, thereby contributing to the renal elimination of endogenous OA from the systemic circulation into the urine. Functions as a biopterin transporters involved in the uptake and the secretion of coenzymes tetrahydrobiopterin (BH4), dihydrobiopterin (BH2) and sepiapterin to urine, thereby determining baseline levels of blood biopterins. Transports prostaglandin E2 (PGE2) and prostaglandin F2-alpha (PGF2-alpha) and may contribute to their renal excretion. Also mediates the uptake of cyclic nucleotides such as cAMP and cGMP. Involved in the transport of neuroactive tryptophan metabolites kynurenate (KYNA) and xanthurenate (XA) and may contribute to their secretion from the brain. May transport glutamate. Also involved in the disposition of uremic toxins and potentially toxic xenobiotics by the renal organic anion secretory pathway, helping reduce their undesired toxicological effects on the body. Uremic toxins include the indoxyl sulfate (IS), hippurate/N-benzoylglycine (HA), indole acetate (IA), 3-carboxy-4- methyl-5-propyl-2-furanpropionate (CMPF) and urate. Xenobiotics include the mycotoxin ochratoxin (OTA). May also contribute to the transport of organic compounds in testes across the blood-testis-barrier. The protein is Solute carrier family 22 member 6 of Macaca fascicularis (Crab-eating macaque).